The following is a 468-amino-acid chain: MDSFEDKLQQLREAFNAGRTRSAEFRAAQLQGLSHFLRDNKQQLQEALAQDLHKSAFESEVSEIAISQAEVDLALRNLRSWMKDEKVSKNLATQLDSAFIRKEPFGLVLIIVPWNYPLNLTLVPLVGAIAAGNCVVLKPSEISKATEKILAEVLPRYLDQSCFAVVLGGPQETGQLLEHRFDYIFFTGNTYVGKIVMAAAAKHLTPITLELGGKNPCYVDDNCDPQTVANRVAWFRYFNAGQTCVAPDYVLCSQEMQERLVPALQNAITRFYGDNPQTSPNLGRIINQKHFERLQGLLGCGRVAIGGQSDEGERYIAPTVLVDVQETEPVMQEEIFGPILPLVTVTNLDEAIEFINRREKPLALYAFSKRSQVIKQVLARTSSGGFCGNDGFMHMTLSSLPFGGVGTSGMGRYHGKFSFDTFSNQRACLLRSPGMEKINDLRYPPYTSRNLRVLLVAMEKRCCSCTLL.

Methionine 1 is subject to N-acetylmethionine. Residue 188 to 193 (GNTYVG) coordinates NAD(+). Active-site residues include glutamate 210 and cysteine 244. Residues cysteine 462 and cysteine 463 are each lipidated (S-palmitoyl cysteine). Cysteine 465 is subject to Cysteine methyl ester. Residue cysteine 465 is the site of S-geranylgeranyl cysteine attachment. Residues 466–468 (TLL) constitute a propeptide, removed in mature form.

It belongs to the aldehyde dehydrogenase family. In terms of processing, dually lipidated in the C-terminus; prenylation occurs prior to, and is a prerequisite for palmitoylation. It is also required for activity towards long-chain substrates.

The protein resides in the cell membrane. The enzyme catalyses an aldehyde + NAD(+) + H2O = a carboxylate + NADH + 2 H(+). It carries out the reaction a long-chain fatty aldehyde + NAD(+) + H2O = a long-chain fatty acid + NADH + 2 H(+). The catalysed reaction is a medium-chain fatty aldehyde + NAD(+) + H2O = a medium-chain fatty acid + NADH + 2 H(+). It catalyses the reaction octanal + NAD(+) + H2O = octanoate + NADH + 2 H(+). The enzyme catalyses nonanal + NAD(+) + H2O = nonanoate + NADH + 2 H(+). It carries out the reaction hexadecanoate + NADH + 2 H(+) = hexadecanal + NAD(+) + H2O. The catalysed reaction is (2E)-octenal + NAD(+) + H2O = (2E)-octenoate + NADH + 2 H(+). It catalyses the reaction (E)-non-2-enal + NAD(+) + H2O = (E)-non-2-enoate + NADH + 2 H(+). The enzyme catalyses (E)-4-hydroxynon-2-enal + NAD(+) + H2O = (E)-4-hydroxynon-2-enoate + NADH + 2 H(+). It carries out the reaction (2E)-hexadecenal + NAD(+) + H2O = (E)-hexadec-2-enoate + NADH + 2 H(+). The catalysed reaction is benzaldehyde + NAD(+) + H2O = benzoate + NADH + 2 H(+). It catalyses the reaction an aldehyde + NADP(+) + H2O = a carboxylate + NADPH + 2 H(+). The enzyme catalyses a medium-chain fatty aldehyde + NADP(+) + H2O = a medium-chain fatty acid + NADPH + 2 H(+). It carries out the reaction hexanal + NADP(+) + H2O = hexanoate + NADPH + 2 H(+). The catalysed reaction is octanal + NADP(+) + H2O = octanoate + NADPH + 2 H(+). It catalyses the reaction nonanal + NADP(+) + H2O = nonanoate + NADPH + 2 H(+). The enzyme catalyses (2E)-octenal + NADP(+) + H2O = (2E)-octenoate + NADPH + 2 H(+). It carries out the reaction (E)-non-2-enal + NADP(+) + H2O = (E)-non-2-enoate + NADPH + 2 H(+). The catalysed reaction is (E)-4-hydroxynon-2-enal + NADP(+) + H2O = (E)-4-hydroxynon-2-enoate + NADPH + 2 H(+). It catalyses the reaction benzaldehyde + NADP(+) + H2O = benzoate + NADPH + 2 H(+). Its pathway is alcohol metabolism; ethanol degradation; acetate from ethanol: step 2/2. In terms of biological role, oxidizes medium and long chain saturated and unsaturated fatty aldehydes generated in the plasma membrane into non-toxic fatty acids. May have a protective role against the cytotoxicity induced by lipid peroxidation. Short-chain fatty aldehydes are not good substrates. Can use both NADP(+) and NAD(+) as electron acceptor in vitro, however in vivo preference will depend on their tissue levels. Low activity towards acetaldehyde and 3,4-dihydroxyphenylacetaldehyde. Able to metabolize aromatic aldehydes such as benzaldehyde to their acid form. This Rattus norvegicus (Rat) protein is Aldehyde dehydrogenase family 3 member B1 (Aldh3b1).